The chain runs to 465 residues: Ras GTPase-activating protein-binding protein 1 (465 aa).

The region spanning 11–133 (VGREFVRQYY…FYVHNDIFRY (123 aa)) is the NTF2 domain. Glycyl lysine isopeptide (Lys-Gly) (interchain with G-Cter in ubiquitin) cross-links involve residues K36, K50, K59, K64, K76, and K123. Positions 142–224 (ITEPQEESEE…EPVLEETAPE (83 aa)) are acidic disordered region. A Phosphothreonine modification is found at T143. Acidic residues-rich tracts occupy residues 145–157 (PQEESEEEVEEPE) and 184–205 (EHLEEPVAEPEPEPEPEPEQEP). Positions 145–242 (PQEESEEEVE…APADIAQTVQ (98 aa)) are disordered. S149 is subject to Phosphoserine. A phosphoserine mark is found at S230, S231, S249, and S252. Residues 254 to 326 (TSKNLPPSGA…PVREAGEQGD (73 aa)) are disordered. Composition is skewed to basic and acidic residues over residues 296–306 (PQRDQRVREQR) and 317–326 (PVREAGEQGD). The RRM domain maps to 339–414 (HQLFIGNLPH…VRLNVEEKKT (76 aa)). Residues K352 and K356 each participate in a glycyl lysine isopeptide (Lys-Gly) (interchain with G-Cter in ubiquitin) cross-link. S372 is modified (phosphoserine). K375 is covalently cross-linked (Glycyl lysine isopeptide (Lys-Gly) (interchain with G-Cter in ubiquitin)). N6-acetyllysine; alternate is present on K375. K375 is covalently cross-linked (Glycyl lysine isopeptide (Lys-Gly) (interchain with G-Cter in SUMO2); alternate). K392 participates in a covalent cross-link: Glycyl lysine isopeptide (Lys-Gly) (interchain with G-Cter in ubiquitin); alternate. The segment at 409–465 (VEEKKTRAAREGDRRDNRLRGPGGPRGGLGGGMRGPPRGGMVQKPGFGVGRSIAPRQ) is RG-rich region. The segment covering 412–427 (KKTRAAREGDRRDNRL) has biased composition (basic and acidic residues). The segment at 412 to 465 (KKTRAAREGDRRDNRLRGPGGPRGGLGGGMRGPPRGGMVQKPGFGVGRSIAPRQ) is disordered. Position 428 is an asymmetric dimethylarginine (R428). Gly residues predominate over residues 429 to 446 (GPGGPRGGLGGGMRGPPR). R434 carries the asymmetric dimethylarginine; alternate modification. R434, R446, R459, and R464 each carry omega-N-methylarginine; alternate. Dimethylated arginine; alternate is present on R459.

In terms of assembly, homodimer and oligomer. Component of a TAU mRNP complex, at least composed of IGF2BP1, ELAVL4 and G3BP1. Binds to the SH3 domain of Ras GTPase-activating protein (RASA1) in proliferating cells. No interaction in quiescent cells. Interacts (via NTF2 domain) with USP10; inhibiting stress granule formation by lowering G3BP1 valence. Interacts (via NTF2 domain) with CAPRIN1; promoting stress granule formation by lowering the saturation-concentration of G3BP1. Interacts (via NTF2 domain) with UBAP2L; promoting stress granule formation. Associates (via RG-rich region) with 40S ribosome subunits. Interacts with RPTOR and SPAG5; this complex is increased by oxidative stress. Interacts with ATXN2L. Interacts with STYXL1. Interacts with CGAS (via N-terminus); this interaction promotes the DNA-binding and activation of CGAS. Interacts (via C-terminus) with RIGI. Interacts with PABPC1. Interacts with QKI (isoforms QKI6 and QKI7); directing N(7)-methylguanine-containing mRNAs to stress granules. It depends on Mg(2+) as a cofactor. Phosphorylation of the acidic disordered region regulates stress granule assembly. RASA1-dependent phosphorylation of Ser-149 induces a conformational change that prevents self-association. Dephosphorylation after HRAS activation is required for stress granule assembly. Ser-149 phosphorylation induces partial nuclear localization. Post-translationally, arg-435 is dimethylated, probably to asymmetric dimethylarginine. In terms of processing, ubiquitinated by TRIM21 via 'Lys-63'-linked polyubiquitination in the NTF2 domain in response to heat shock, leading to stress granule disassembly: ubiquitination promotes interaction with the FAF2 adapter, followed by interaction with VCP, which extracts G3BP1 from stress granules, leading to stress granule disassembly. In case of prolonged stress, ubiquitination by TRIM21 leads to autophagy-dependent degradation of G3BP1 via recruitment of ubiquitinated G3BP1 by SQSTM1 and/or CALCOCO2 to autophagosomes.

It localises to the cytoplasm. It is found in the cytosol. The protein localises to the perikaryon. The protein resides in the stress granule. Its subcellular location is the nucleus. It carries out the reaction ATP + H2O = ADP + phosphate + H(+). Under physiological conditions, G3BP1 adopts a compact state that is stabilized by intramolecular interactions between the RG-rich and the acidic regions that inhibit phase separation. Upon stress, polysomes disassemble and mRNAs are released in an unfolded protein-free state. Binding of unfolded mRNA to G3BP1 outcompetes the intramolecular interactions and RNA-bound G3BP1 adopts an expanded conformation in which the RG-rich region becomes exposed to engage in protein-protein and protein-RNA interactions, allowing physical cross-linking of RNA molecules to form protein-RNA condensates, leading to liquid-liquid phase separation (LLPS). Its function is as follows. Protein involved in various processes, such as stress granule formation and innate immunity. Plays an essential role in stress granule formation. Stress granules are membraneless compartments that store mRNAs and proteins, such as stalled translation pre-initiation complexes, in response to stress. Promotes formation of stress granules phase-separated membraneless compartment by undergoing liquid-liquid phase separation (LLPS) upon unfolded RNA-binding: functions as a molecular switch that triggers RNA-dependent LLPS in response to a rise in intracellular free RNA concentrations. Also acts as an ATP- and magnesium-dependent helicase: unwinds DNA/DNA, RNA/DNA, and RNA/RNA substrates with comparable efficiency. Acts unidirectionally by moving in the 5' to 3' direction along the bound single-stranded DNA. Unwinds preferentially partial DNA and RNA duplexes having a 17 bp annealed portion and either a hanging 3' tail or hanging tails at both 5'- and 3'-ends. Plays an essential role in innate immunity by promoting CGAS and RIGI activity. Participates in the DNA-triggered cGAS/STING pathway by promoting the DNA binding and activation of CGAS. Triggers the condensation of cGAS, a process probably linked to the formation of membrane-less organelles. Also enhances RIGI-induced type I interferon production probably by helping RIGI at sensing pathogenic RNA. May also act as a phosphorylation-dependent sequence-specific endoribonuclease in vitro: Cleaves exclusively between cytosine and adenine and cleaves MYC mRNA preferentially at the 3'-UTR. The protein is Ras GTPase-activating protein-binding protein 1 (G3BP1) of Bos taurus (Bovine).